A 194-amino-acid chain; its full sequence is GTP cyclohydrolase-2 (194 aa).

GTP is bound at residue 47–51 (RVHSE). Zn(2+) contacts are provided by cysteine 52, cysteine 63, and cysteine 65. Residues glutamine 68, 90 to 92 (EGR), and threonine 112 contribute to the GTP site. The active-site Proton acceptor is aspartate 124. Arginine 126 (nucleophile) is an active-site residue. GTP is bound by residues threonine 147 and lysine 152.

The protein belongs to the GTP cyclohydrolase II family. In terms of assembly, homodimer. It depends on Zn(2+) as a cofactor.

The catalysed reaction is GTP + 4 H2O = 2,5-diamino-6-hydroxy-4-(5-phosphoribosylamino)-pyrimidine + formate + 2 phosphate + 3 H(+). It participates in cofactor biosynthesis; riboflavin biosynthesis; 5-amino-6-(D-ribitylamino)uracil from GTP: step 1/4. Catalyzes the conversion of GTP to 2,5-diamino-6-ribosylamino-4(3H)-pyrimidinone 5'-phosphate (DARP), formate and pyrophosphate. The sequence is that of GTP cyclohydrolase-2 from Buchnera aphidicola subsp. Acyrthosiphon pisum (strain APS) (Acyrthosiphon pisum symbiotic bacterium).